The sequence spans 291 residues: Ribosomal RNA small subunit methyltransferase A (291 aa).

S-adenosyl-L-methionine is bound by residues His-21, Leu-23, Gly-48, Glu-70, Asp-95, and Asn-115.

It belongs to the class I-like SAM-binding methyltransferase superfamily. rRNA adenine N(6)-methyltransferase family. RsmA subfamily.

The protein resides in the cytoplasm. It catalyses the reaction adenosine(1518)/adenosine(1519) in 16S rRNA + 4 S-adenosyl-L-methionine = N(6)-dimethyladenosine(1518)/N(6)-dimethyladenosine(1519) in 16S rRNA + 4 S-adenosyl-L-homocysteine + 4 H(+). In terms of biological role, specifically dimethylates two adjacent adenosines (A1518 and A1519) in the loop of a conserved hairpin near the 3'-end of 16S rRNA in the 30S particle. May play a critical role in biogenesis of 30S subunits. The sequence is that of Ribosomal RNA small subunit methyltransferase A from Prochlorococcus marinus (strain NATL1A).